The following is a 197-amino-acid chain: Nucleoid occlusion factor SlmA (197 aa).

The 61-residue stretch at 7–67 folds into the HTH tetR-type domain; that stretch reads INRREHILQC…GLIEFIEESL (61 aa). A DNA-binding region (H-T-H motif) is located at residues 30–49; the sequence is TTAKLASEVGVSEAALYRHF. Residues 109-136 are a coiled coil; it reads DALLGENERLRSRISNLFAKIETQLKQI.

Belongs to the nucleoid occlusion factor SlmA family. As to quaternary structure, homodimer. Interacts with FtsZ.

Its subcellular location is the cytoplasm. It is found in the nucleoid. Required for nucleoid occlusion (NO) phenomenon, which prevents Z-ring formation and cell division over the nucleoid. Acts as a DNA-associated cell division inhibitor that binds simultaneously chromosomal DNA and FtsZ, and disrupts the assembly of FtsZ polymers. SlmA-DNA-binding sequences (SBS) are dispersed on non-Ter regions of the chromosome, preventing FtsZ polymerization at these regions. The polypeptide is Nucleoid occlusion factor SlmA (Shewanella baltica (strain OS223)).